A 198-amino-acid polypeptide reads, in one-letter code: Ribonuclease HII (198 aa).

The 193-residue stretch at 6–198 (EQIAGVDEVG…APCQASLLPD (193 aa)) folds into the RNase H type-2 domain. The a divalent metal cation site is built by aspartate 12, glutamate 13, and aspartate 108.

This sequence belongs to the RNase HII family. It depends on Mn(2+) as a cofactor. Requires Mg(2+) as cofactor.

It localises to the cytoplasm. It catalyses the reaction Endonucleolytic cleavage to 5'-phosphomonoester.. Functionally, endonuclease that specifically degrades the RNA of RNA-DNA hybrids. The polypeptide is Ribonuclease HII (Acaryochloris marina (strain MBIC 11017)).